Reading from the N-terminus, the 457-residue chain is D-inositol 3-phosphate glycosyltransferase (457 aa).

H34 provides a ligand contact to 1D-myo-inositol 3-phosphate. Residues 40 to 41 and G48 contribute to the UDP-N-acetyl-alpha-D-glucosamine site; that span reads QP. Residues 45–50, K103, Y136, T160, and R180 contribute to the 1D-myo-inositol 3-phosphate site; that span reads DAGGMN. R267, K272, and V333 together coordinate UDP-N-acetyl-alpha-D-glucosamine. Mg(2+)-binding residues include F342, R343, and A345. Positions 355 and 363 each coordinate UDP-N-acetyl-alpha-D-glucosamine. T369 is a binding site for Mg(2+).

This sequence belongs to the glycosyltransferase group 1 family. MshA subfamily. As to quaternary structure, homodimer.

The enzyme catalyses 1D-myo-inositol 3-phosphate + UDP-N-acetyl-alpha-D-glucosamine = 1D-myo-inositol 2-acetamido-2-deoxy-alpha-D-glucopyranoside 3-phosphate + UDP + H(+). Catalyzes the transfer of a N-acetyl-glucosamine moiety to 1D-myo-inositol 3-phosphate to produce 1D-myo-inositol 2-acetamido-2-deoxy-glucopyranoside 3-phosphate in the mycothiol biosynthesis pathway. The protein is D-inositol 3-phosphate glycosyltransferase of Streptomyces coelicolor (strain ATCC BAA-471 / A3(2) / M145).